A 311-amino-acid chain; its full sequence is Olfactory receptor 287 (311 aa).

Residues 1–27 (MAWSTGQNLSTPGPFILLGFPGPRSMR) are Extracellular-facing. Residue asparagine 8 is glycosylated (N-linked (GlcNAc...) asparagine). A helical transmembrane segment spans residues 28-53 (IGLFLLFLVMYLLTVVGNLAIISLVG). Residues 54-60 (AHRCLQT) are Cytoplasmic-facing. Residues 61–82 (PMYFFLCNLSFLEIWFTTACVP) traverse the membrane as a helical segment. Over 83 to 103 (KTLATFAPRGGVISLAGCATQ) the chain is Extracellular. A disulfide bridge connects residues cysteine 100 and cysteine 192. A helical transmembrane segment spans residues 104-123 (MYFVFSLGCTEYFLLAVMAY). Residues 124-142 (DRYLAICLPLRYGGIMTPG) lie on the Cytoplasmic side of the membrane. Residues 143 to 161 (LAMRLALGSWLCGFSAITV) traverse the membrane as a helical segment. Residues 162–199 (PATLIARLSFCGSRVINHFFCDISPWIVLSCTDTQVVE) lie on the Extracellular side of the membrane. The chain crosses the membrane as a helical span at residues 200–222 (LVSFGIAFCVILGSCGITLVSYA). The Cytoplasmic portion of the chain corresponds to 223-239 (YIITTIIKIPSARGRHR). Residues 240–263 (AFSTCSSHLTVVLIWYGSTIFLHV) traverse the membrane as a helical segment. Over 264–275 (RTSVESSLDLTK) the chain is Extracellular. The helical transmembrane segment at 276 to 295 (AITVLNTIVTPVLNPFIYTL) threads the bilayer. Residues 296–311 (RNKDVKEALRRTVKGK) lie on the Cytoplasmic side of the membrane.

It belongs to the G-protein coupled receptor 1 family. In terms of tissue distribution, olfactory epithelium.

The protein localises to the cell membrane. Odorant receptor. The chain is Olfactory receptor 287 (Olr287) from Rattus norvegicus (Rat).